The chain runs to 142 residues: Large ribosomal subunit protein uL11 (142 aa).

Belongs to the universal ribosomal protein uL11 family. In terms of assembly, part of the ribosomal stalk of the 50S ribosomal subunit. Interacts with L10 and the large rRNA to form the base of the stalk. L10 forms an elongated spine to which L12 dimers bind in a sequential fashion forming a multimeric L10(L12)X complex. One or more lysine residues are methylated.

Forms part of the ribosomal stalk which helps the ribosome interact with GTP-bound translation factors. The polypeptide is Large ribosomal subunit protein uL11 (Thermobifida fusca (strain YX)).